We begin with the raw amino-acid sequence, 202 residues long: Glycerol-3-phosphate acyltransferase (202 aa).

Transmembrane regions (helical) follow at residues 2–22 (MIVLMLLLAYIVGSFPSGVII), 54–74 (FVVTFLDIFKGFIVVFFPLLF), 85–105 (FFTNGLIVGVFAILGHVYPIF), 118–138 (AGVVLGVAPILLLILAAIFFL), 140–160 (LYLTKYVSLSSIVAAICCVIG), and 162–182 (LIIHDYILLVVSIIVAILLIF).

The protein belongs to the PlsY family. Probably interacts with PlsX.

It is found in the cell membrane. The catalysed reaction is an acyl phosphate + sn-glycerol 3-phosphate = a 1-acyl-sn-glycero-3-phosphate + phosphate. The protein operates within lipid metabolism; phospholipid metabolism. In terms of biological role, catalyzes the transfer of an acyl group from acyl-phosphate (acyl-PO(4)) to glycerol-3-phosphate (G3P) to form lysophosphatidic acid (LPA). This enzyme utilizes acyl-phosphate as fatty acyl donor, but not acyl-CoA or acyl-ACP. This is Glycerol-3-phosphate acyltransferase from Staphylococcus carnosus (strain TM300).